The following is a 363-amino-acid chain: Spermatogenesis-associated protein 22 (363 aa).

Composition is skewed to polar residues over residues 1-12 (MKRSLNENSARS) and 145-157 (SCPM…QQKQ). Disordered stretches follow at residues 1–51 (MKRS…DNYD) and 145–169 (SCPM…LPRN).

Component of a multiprotein complex with MEIOB and RPA2. Interacts with MEIOB. Interacts with the complex BRME1:HSF2BP:BRCA2. As to expression, expressed in testis.

It localises to the chromosome. Functionally, meiosis-specific protein required for homologous recombination in meiosis I. This chain is Spermatogenesis-associated protein 22 (SPATA22), found in Macaca fascicularis (Crab-eating macaque).